Here is a 142-residue protein sequence, read N- to C-terminus: Putative pre-16S rRNA nuclease (142 aa).

The protein belongs to the YqgF nuclease family.

Its subcellular location is the cytoplasm. Functionally, could be a nuclease involved in processing of the 5'-end of pre-16S rRNA. The chain is Putative pre-16S rRNA nuclease from Malacoplasma penetrans (strain HF-2) (Mycoplasma penetrans).